Here is an 87-residue protein sequence, read N- to C-terminus: uncharacterized protein (87 aa).

The next 2 helical transmembrane spans lie at 8 to 28 (IVVL…IFDL) and 47 to 67 (LAGS…LIGL).

The protein localises to the cell membrane. This is an uncharacterized protein from Bacillus subtilis (strain 168).